Consider the following 219-residue polypeptide: UPF0619 GPI-anchored membrane protein AFUA_3G00880 (219 aa).

The N-terminal stretch at M1 to A16 is a signal peptide. The N-linked (GlcNAc...) asparagine glycan is linked to N85. Disordered regions lie at residues S107–S144 and S160–V205. The segment covering S114–S144 has biased composition (low complexity). N198 carries the GPI-like-anchor amidated asparagine lipid modification. A propeptide spans G199–L219 (removed in mature form).

This sequence belongs to the UPF0619 family. The GPI-like anchor contains a phosphoceramide lipid group. The anchor position has not been determined.

It localises to the cell membrane. In Aspergillus fumigatus (strain ATCC MYA-4609 / CBS 101355 / FGSC A1100 / Af293) (Neosartorya fumigata), this protein is UPF0619 GPI-anchored membrane protein AFUA_3G00880.